Here is a 120-residue protein sequence, read N- to C-terminus: ATP synthase subunit a (120 aa).

4 helical membrane-spanning segments follow: residues 2–22 (FFYS…YSYL), 29–49 (FFPF…VGIV), 59–79 (LNIT…LGFY), and 94–116 (IPFV…RSVG).

Belongs to the ATPase A chain family. As to quaternary structure, F-type ATPases have 2 components, CF(1) - the catalytic core - and CF(0) - the membrane proton channel. CF(1) has five subunits: alpha(3), beta(3), gamma(1), delta(1), epsilon(1). CF(0) has three main subunits: a, b and c.

It is found in the mitochondrion inner membrane. Functionally, mitochondrial membrane ATP synthase (F(1)F(0) ATP synthase or Complex V) produces ATP from ADP in the presence of a proton gradient across the membrane which is generated by electron transport complexes of the respiratory chain. F-type ATPases consist of two structural domains, F(1) - containing the extramembraneous catalytic core and F(0) - containing the membrane proton channel, linked together by a central stalk and a peripheral stalk. During catalysis, ATP synthesis in the catalytic domain of F(1) is coupled via a rotary mechanism of the central stalk subunits to proton translocation. Key component of the proton channel; it may play a direct role in the translocation of protons across the membrane. The sequence is that of ATP synthase subunit a (ATP6) from Naegleria fowleri (Brain eating amoeba).